The following is a 369-amino-acid chain: Protein V (369 aa).

Disordered regions lie at residues 1–24 (MDQD…GRES) and 38–320 (SEPT…GHRR). Positions 7–20 (ISKEDSEVEREASG) are enriched in basic and acidic residues. Residues 50–61 (LHNTINTLQRPG) show a composition bias toward polar residues. Basic and acidic residues-rich tracts occupy residues 99–110 (AEAHARNVDKQN) and 150–168 (GAED…RGED). Phosphoserine; by host is present on residues serine 249, serine 257, and serine 260. Zn(2+) is bound by residues histidine 318, cysteine 337, cysteine 341, cysteine 353, cysteine 355, cysteine 358, cysteine 362, and cysteine 365.

Belongs to the paramyxoviruses V protein family. Interacts with host IFIH1/MDA5 and DHX58/LGP2. Interacts with host IRF3. Interacts with host RIGI regulatory protein (via CARDs domain) and host TRIM25 (via SPRY domain); these interactions prevent TRIM25-mediated ubiquitination of RIG-I and disrupts downstream RIG-I signaling.

Its subcellular location is the host cytoplasm. Its function is as follows. Plays an essential role in the inhibition of host immune response. Prevents the establishment of cellular antiviral state by blocking interferon-alpha/beta (IFN-alpha/beta) production and signaling pathway. Interacts with host IFIH1/MDA5 and DHX58/LGP2 to inhibit the transduction pathway involved in the activation of IFN-beta promoter, thus protecting the virus against cell antiviral state. Also interacts with and inhibits host IRF3. Blocks the type I interferon signaling pathway by disrupting the RIG-I signaling pathway. The sequence is that of Protein V (P/V/C) from Sendai virus (strain Hamamatsu) (SeV).